Consider the following 153-residue polypeptide: Endoribonuclease YbeY (153 aa).

Residues histidine 113, histidine 117, and histidine 123 each coordinate Zn(2+).

The protein belongs to the endoribonuclease YbeY family. Zn(2+) is required as a cofactor.

It localises to the cytoplasm. In terms of biological role, single strand-specific metallo-endoribonuclease involved in late-stage 70S ribosome quality control and in maturation of the 3' terminus of the 16S rRNA. The sequence is that of Endoribonuclease YbeY from Aliivibrio salmonicida (strain LFI1238) (Vibrio salmonicida (strain LFI1238)).